Consider the following 177-residue polypeptide: Dihydrofolate reductase (177 aa).

The catalysed reaction is (6S)-5,6,7,8-tetrahydrofolate + NADP(+) = 7,8-dihydrofolate + NADPH + H(+). Functionally, provides the tetrahydrofolates necessary for the synthesis of nucleotides and amino acids. Bacteriophage T5 induces high levels of dihydrofolate reductase in the host cell, probably for the viral replication. The polypeptide is Dihydrofolate reductase (Escherichia phage T5 (Enterobacteria phage T5)).